The sequence spans 720 residues: Polyribonucleotide nucleotidyltransferase (720 aa).

Mg(2+)-binding residues include Asp-487 and Asp-493. The region spanning 554–613 (PRITTISIPKEKIREVIGTGGKVIREICEQTGAKIDIDDDGTIKVASVDADAAQRAIDWI) is the KH domain. One can recognise an S1 motif domain in the interval 623–691 (GVIYNGKVVK…DRGKVKLSMK (69 aa)). The segment at 695–720 (QTTGEDISAQLEAERAASKRERHHED) is disordered. Basic and acidic residues predominate over residues 706-720 (EAERAASKRERHHED).

Belongs to the polyribonucleotide nucleotidyltransferase family. It depends on Mg(2+) as a cofactor.

It localises to the cytoplasm. The enzyme catalyses RNA(n+1) + phosphate = RNA(n) + a ribonucleoside 5'-diphosphate. Functionally, involved in mRNA degradation. Catalyzes the phosphorolysis of single-stranded polyribonucleotides processively in the 3'- to 5'-direction. This Paramagnetospirillum magneticum (strain ATCC 700264 / AMB-1) (Magnetospirillum magneticum) protein is Polyribonucleotide nucleotidyltransferase.